The chain runs to 211 residues: Glial cell line-derived neurotrophic factor (211 aa).

The N-terminal stretch at 1-19 (MKLWDVVAVCLVLLHTASA) is a signal peptide. The propeptide occupies 20-75 (FPLPAGKRLLEAPAEDHSLGHRRVPFALTSDSNMPEDYPDQFDDVMDFIQATIKRL). The disordered stretch occupies residues 76-113 (KRSPDKQAAALPRRERNRQAAAASPENSRGKGRRGQRG). 3 disulfide bridges follow: Cys-118-Cys-179, Cys-145-Cys-208, and Cys-149-Cys-210. N-linked (GlcNAc...) asparagine glycans are attached at residues Asn-126 and Asn-162.

It belongs to the TGF-beta family. GDNF subfamily. As to quaternary structure, homodimer; disulfide-linked. Interacts with GFRA1 coreceptor and RET: forms a 2:2:2 ternary complex composed of GDNF ligand, GFRA1 and RET receptor. Interacts (via propeptide) with SORL1 (via N-terminal ectodomain); this interaction affects GDNF-regulated, but not constitutive secretion. Also interacts with SORL1 in complex with GFRA1; this interaction leads to GDNF endocytosis and lysosomal degradation. As to expression, expressed in both the central nervous system (CNS) and in non-CNS tissues, including the kidney, lung, bone, heart, liver, spleen, sciatic nerve and blood. Expressed in brain (at protein level). Localizes at the proximal ligature of the hypoglossal nerve.

The protein localises to the secreted. Neurotrophic factor that enhances survival and morphological differentiation of dopaminergic neurons and increases their high-affinity dopamine uptake. Acts by binding to its coreceptor, GFRA1, leading to autophosphorylation and activation of the RET receptor. May also modulate local neuronal effects in distal regions of the motor neuron. Involved in the development of the neural crest. This chain is Glial cell line-derived neurotrophic factor (Gdnf), found in Rattus norvegicus (Rat).